The following is a 232-amino-acid chain: Adenosylcobinamide-GDP ribazoletransferase (232 aa).

The next 6 helical transmembrane spans lie at 32–52, 54–74, 102–122, 126–146, 172–192, and 212–232; these read PIYFPLVGYIPGILFFFGGSF, NFLLKILFLILGYYFFDLFHF, VGPFAVFFGTLYVVVFWTLYL, PITFIYSSVFGRYSMNLLMFF, FFLLPLLFSMKYFFISYVVTV, and DVLGGACLMTNGLLLVVLGVV.

This sequence belongs to the CobS family. Mg(2+) is required as a cofactor.

The protein resides in the cell inner membrane. It carries out the reaction alpha-ribazole + adenosylcob(III)inamide-GDP = adenosylcob(III)alamin + GMP + H(+). The catalysed reaction is alpha-ribazole 5'-phosphate + adenosylcob(III)inamide-GDP = adenosylcob(III)alamin 5'-phosphate + GMP + H(+). It participates in cofactor biosynthesis; adenosylcobalamin biosynthesis; adenosylcobalamin from cob(II)yrinate a,c-diamide: step 7/7. Functionally, joins adenosylcobinamide-GDP and alpha-ribazole to generate adenosylcobalamin (Ado-cobalamin). Also synthesizes adenosylcobalamin 5'-phosphate from adenosylcobinamide-GDP and alpha-ribazole 5'-phosphate. The sequence is that of Adenosylcobinamide-GDP ribazoletransferase from Thermosipho melanesiensis (strain DSM 12029 / CIP 104789 / BI429).